Here is a 320-residue protein sequence, read N- to C-terminus: Putative S-adenosyl-L-methionine-dependent methyltransferase MAP_4078 (320 aa).

Residues Asp132 and 161–162 (DL) contribute to the S-adenosyl-L-methionine site. The tract at residues 294–320 (PPHDIEDAIPQTRFVAAQRTERTRPDR) is disordered.

The protein belongs to the UPF0677 family.

Functionally, exhibits S-adenosyl-L-methionine-dependent methyltransferase activity. This Mycolicibacterium paratuberculosis (strain ATCC BAA-968 / K-10) (Mycobacterium paratuberculosis) protein is Putative S-adenosyl-L-methionine-dependent methyltransferase MAP_4078.